A 298-amino-acid polypeptide reads, in one-letter code: 4-hydroxy-tetrahydrodipicolinate synthase (298 aa).

T48 contributes to the pyruvate binding site. Y137 (proton donor/acceptor) is an active-site residue. The active-site Schiff-base intermediate with substrate is the K166. I207 is a binding site for pyruvate.

It belongs to the DapA family. Homotetramer; dimer of dimers.

It is found in the cytoplasm. It catalyses the reaction L-aspartate 4-semialdehyde + pyruvate = (2S,4S)-4-hydroxy-2,3,4,5-tetrahydrodipicolinate + H2O + H(+). Its pathway is amino-acid biosynthesis; L-lysine biosynthesis via DAP pathway; (S)-tetrahydrodipicolinate from L-aspartate: step 3/4. Functionally, catalyzes the condensation of (S)-aspartate-beta-semialdehyde [(S)-ASA] and pyruvate to 4-hydroxy-tetrahydrodipicolinate (HTPA). The polypeptide is 4-hydroxy-tetrahydrodipicolinate synthase (Campylobacter hominis (strain ATCC BAA-381 / DSM 21671 / CCUG 45161 / LMG 19568 / NCTC 13146 / CH001A)).